The primary structure comprises 401 residues: MIAVLGIKRNTPIEIREKLTIKANKHDEYLDRLLKYLDGVIILATCNRTEIYFNVSFINEELLKKIFEIFNWNYSYRKYIFISEDKKACKHLFEVTCGFHSKILGEDQILGQVKTSYFKSLNAKALNLELQRLFQYAITCGKKFKSQSRLFEIPVSSASIVVNESINKDCKKFMVLGYGDVGRLTMKYLLAHNINEVYLAVRNKKIKDEIVDERVNVIDFEEKNKYINDMDCVISCTSAPHIVIKKQDINNIGDNILIYDLAVPRDVDDEINDIDRAQVYNIDNISYINDGNKKMRFDKMDSNKFILENYLNEYYEWKRLRSIAPFIEELKVTSKEIYDKRITTFKNKCKYRGDVDLANKMIKSTSDYYMNRAIEIMKEETLKGSEEECLRIIKSIFIAKK.

Substrate is bound by residues 45–48, S101, 106–108, and Q112; these read TCNR and EDQ. The Nucleophile role is filled by C46. 177–182 is a binding site for NADP(+); sequence GYGDVG.

It belongs to the glutamyl-tRNA reductase family. In terms of assembly, homodimer.

The enzyme catalyses (S)-4-amino-5-oxopentanoate + tRNA(Glu) + NADP(+) = L-glutamyl-tRNA(Glu) + NADPH + H(+). The protein operates within porphyrin-containing compound metabolism; protoporphyrin-IX biosynthesis; 5-aminolevulinate from L-glutamyl-tRNA(Glu): step 1/2. In terms of biological role, catalyzes the NADPH-dependent reduction of glutamyl-tRNA(Glu) to glutamate 1-semialdehyde (GSA). The chain is Glutamyl-tRNA reductase from Clostridium botulinum (strain Alaska E43 / Type E3).